A 516-amino-acid polypeptide reads, in one-letter code: L-amino-acid oxidase (516 aa).

Residues 1-18 (MNVFFMFSLLFLAALGSC) form the signal peptide. Cys-28 and Cys-189 are disulfide-bonded. FAD-binding positions include 61–62 (MS), 81–82 (EA), Arg-89, and 103–106 (GPMR). Arg-106 and His-239 together coordinate substrate. Val-279 serves as a coordination point for FAD. A disulfide bridge connects residues Cys-349 and Cys-430. The N-linked (GlcNAc...) asparagine glycan is linked to Asn-379. Residue Tyr-390 participates in substrate binding. FAD is bound by residues Glu-475 and 482 to 487 (GWIDST). Position 482 to 483 (482 to 483 (GW)) interacts with substrate.

The protein belongs to the flavin monoamine oxidase family. FIG1 subfamily. Homodimer; non-covalently linked. FAD is required as a cofactor. In terms of processing, N-glycosylated. As to expression, expressed by the venom gland.

Its subcellular location is the secreted. The catalysed reaction is an L-alpha-amino acid + O2 + H2O = a 2-oxocarboxylate + H2O2 + NH4(+). Catalyzes an oxidative deamination of predominantly hydrophobic and aromatic L-amino acids, thus producing hydrogen peroxide that may contribute to the diverse toxic effects of this enzyme. Exhibits diverse biological activities, such as hemorrhage, hemolysis, edema, apoptosis of vascular endothelial cells or tumor cell lines, antibacterial and antiparasitic activities, as well as regulation of platelet aggregation. Effects of snake L-amino oxidases on platelets are controversial, since they either induce aggregation or inhibit agonist-induced aggregation. These different effects are probably due to different experimental conditions. The chain is L-amino-acid oxidase from Sistrurus catenatus edwardsii (Desert massasauga).